The following is a 288-amino-acid chain: ATP synthase gamma chain (288 aa).

It belongs to the ATPase gamma chain family. In terms of assembly, F-type ATPases have 2 components, CF(1) - the catalytic core - and CF(0) - the membrane proton channel. CF(1) has five subunits: alpha(3), beta(3), gamma(1), delta(1), epsilon(1). CF(0) has three main subunits: a, b and c.

The protein resides in the cell membrane. Functionally, produces ATP from ADP in the presence of a proton gradient across the membrane. The gamma chain is believed to be important in regulating ATPase activity and the flow of protons through the CF(0) complex. This Staphylococcus epidermidis (strain ATCC 35984 / DSM 28319 / BCRC 17069 / CCUG 31568 / BM 3577 / RP62A) protein is ATP synthase gamma chain.